Here is a 228-residue protein sequence, read N- to C-terminus: MRIKSMAKSELPRERLIHNGAKSLSNSELLAILINTGRHGFSSLDIANELLISFNGLKELKHLSINDLTTIKGIGLYKAVILKAAFELGERMYARDFNEKIKITSPSDVSNIMMSKMKDLTQEHFVVLLLNSKNIVIKEETIYKGTLNSSVIHPREVFKAAIRASSNAIIVLHNHPSGDVTPSKEDIETTIRLKECGELLGIQVLDHIIIGDQKYASLVEEGYFDLRN.

One can recognise an MPN domain in the interval 102–224; it reads KITSPSDVSN…YASLVEEGYF (123 aa). Positions 173, 175, and 186 each coordinate Zn(2+). Residues 173-186 carry the JAMM motif motif; that stretch reads HNHPSGDVTPSKED.

The protein belongs to the UPF0758 family.

This chain is UPF0758 protein SH1266, found in Staphylococcus haemolyticus (strain JCSC1435).